The following is a 170-amino-acid chain: Crossover junction endodeoxyribonuclease RuvC (170 aa).

Residues Asp-11, Glu-71, and Asp-143 contribute to the active site. Residues Asp-11, Glu-71, and Asp-143 each contribute to the Mg(2+) site.

It belongs to the RuvC family. Homodimer which binds Holliday junction (HJ) DNA. The HJ becomes 2-fold symmetrical on binding to RuvC with unstacked arms; it has a different conformation from HJ DNA in complex with RuvA. In the full resolvosome a probable DNA-RuvA(4)-RuvB(12)-RuvC(2) complex forms which resolves the HJ. Mg(2+) is required as a cofactor.

The protein resides in the cytoplasm. The catalysed reaction is Endonucleolytic cleavage at a junction such as a reciprocal single-stranded crossover between two homologous DNA duplexes (Holliday junction).. Functionally, the RuvA-RuvB-RuvC complex processes Holliday junction (HJ) DNA during genetic recombination and DNA repair. Endonuclease that resolves HJ intermediates. Cleaves cruciform DNA by making single-stranded nicks across the HJ at symmetrical positions within the homologous arms, yielding a 5'-phosphate and a 3'-hydroxyl group; requires a central core of homology in the junction. The consensus cleavage sequence is 5'-(A/T)TT(C/G)-3'. Cleavage occurs on the 3'-side of the TT dinucleotide at the point of strand exchange. HJ branch migration catalyzed by RuvA-RuvB allows RuvC to scan DNA until it finds its consensus sequence, where it cleaves and resolves the cruciform DNA. This chain is Crossover junction endodeoxyribonuclease RuvC, found in Agrobacterium fabrum (strain C58 / ATCC 33970) (Agrobacterium tumefaciens (strain C58)).